Reading from the N-terminus, the 302-residue chain is MNSRHPSAPYRGRFAPSPTGPLHLGSLYTAVVGFCEARRRGGAWLVRIDDADRQRCRQTHADSILRTLETHGLWWDEAVLFQSLRDEIYRVALERLAAGSRVFPCTCPRRELAGSGPIYSGRCRARYPHPPAGEHALRLRVGDAVIGFDDRLQGRIEQDLGSAVGDFVVRRRDGLPAYHLATVIDDAEQRVTEVLRGVDLLDSTPRQILLQECLGLPRPDYCHIPVLTDRGGIKLSKQAGARPVDEDAPSENLWTVLALLGFVPEPPLIGAKPAEILDWAVAHWDIRRLPPGRRIDVGGLAV.

L-glutamate contacts are provided by residues 13-17 (RFAPS) and D49. Residues 16-26 (PSPTGPLHLGS) carry the 'HIGH' region motif. Zn(2+) is bound by residues C105, C107, Y119, and C123. 2 residues coordinate L-glutamate: Y178 and R196. The 'KMSKS' region signature appears at 234–238 (KLSKQ). K237 serves as a coordination point for ATP.

The protein belongs to the class-I aminoacyl-tRNA synthetase family. GluQ subfamily. Requires Zn(2+) as cofactor.

Functionally, catalyzes the tRNA-independent activation of glutamate in presence of ATP and the subsequent transfer of glutamate onto a tRNA(Asp). Glutamate is transferred on the 2-amino-5-(4,5-dihydroxy-2-cyclopenten-1-yl) moiety of the queuosine in the wobble position of the QUC anticodon. This chain is Glutamyl-Q tRNA(Asp) synthetase, found in Methylococcus capsulatus (strain ATCC 33009 / NCIMB 11132 / Bath).